The following is a 337-amino-acid chain: Ribosomal RNA small subunit methyltransferase H (337 aa).

Residues 45 to 47 (GGH), Asp64, His91, Asp112, and Gln119 each bind S-adenosyl-L-methionine.

It belongs to the methyltransferase superfamily. RsmH family.

It is found in the cytoplasm. It carries out the reaction cytidine(1402) in 16S rRNA + S-adenosyl-L-methionine = N(4)-methylcytidine(1402) in 16S rRNA + S-adenosyl-L-homocysteine + H(+). Specifically methylates the N4 position of cytidine in position 1402 (C1402) of 16S rRNA. This Cutibacterium acnes (strain DSM 16379 / KPA171202) (Propionibacterium acnes) protein is Ribosomal RNA small subunit methyltransferase H.